Here is a 421-residue protein sequence, read N- to C-terminus: Zinc finger protein Pegasus (421 aa).

The segment at 35 to 55 (GDKEAETLQGAGTEGDQNGLD) is disordered. 3 consecutive C2H2-type zinc fingers follow at residues 82–104 (LKCR…IRIH), 110–132 (HRCH…MRSH), and 138–161 (YKCE…RRKH). The span at 229–238 (SMTKSSQTSG) shows a compositional bias: polar residues. 2 disordered regions span residues 229–249 (SMTK…LMVD) and 292–358 (QPAT…PTLP). Residues 292-313 (QPATPAVVSSVSASIAQSSSPT) are compositionally biased toward low complexity. Polar residues predominate over residues 339-351 (HTSTPSISNSQPS). 2 consecutive C2H2-type zinc fingers follow at residues 366 to 388 (HHCQ…MGCH) and 394 to 418 (FQCN…RGQH).

It belongs to the Ikaros C2H2-type zinc-finger protein family. In terms of assembly, probably self-associates.

The protein localises to the nucleus. Its function is as follows. Transcriptional repressor that binds the core 5'GNNTGTNG-3' DNA consensus sequence. This is Zinc finger protein Pegasus (IKZF5) from Gallus gallus (Chicken).